The primary structure comprises 414 residues: CinA-like protein (414 aa).

It belongs to the CinA family.

The protein is CinA-like protein of Acidobacterium capsulatum (strain ATCC 51196 / DSM 11244 / BCRC 80197 / JCM 7670 / NBRC 15755 / NCIMB 13165 / 161).